Reading from the N-terminus, the 337-residue chain is tRNA N6-adenosine threonylcarbamoyltransferase (337 aa).

2 residues coordinate Fe cation: His111 and His115. Residues 134–138 (LVSGG), Asp167, Gly180, and Asn272 each bind substrate. Asp300 contacts Fe cation.

The protein belongs to the KAE1 / TsaD family. Fe(2+) is required as a cofactor.

Its subcellular location is the cytoplasm. The enzyme catalyses L-threonylcarbamoyladenylate + adenosine(37) in tRNA = N(6)-L-threonylcarbamoyladenosine(37) in tRNA + AMP + H(+). Functionally, required for the formation of a threonylcarbamoyl group on adenosine at position 37 (t(6)A37) in tRNAs that read codons beginning with adenine. Is involved in the transfer of the threonylcarbamoyl moiety of threonylcarbamoyl-AMP (TC-AMP) to the N6 group of A37, together with TsaE and TsaB. TsaD likely plays a direct catalytic role in this reaction. The polypeptide is tRNA N6-adenosine threonylcarbamoyltransferase (Methylococcus capsulatus (strain ATCC 33009 / NCIMB 11132 / Bath)).